Reading from the N-terminus, the 1247-residue chain is MLLNDQKFLPINIHYLNQGRFDLNKLKNFNLLINQRENWRFFLINGLKLAFKEFEHFKIKNNNFIIDIVFQEKFLFFKQIRQAYLKKVETFGYNIFIPIIITQKILNKKNNLNLTFFKWLDLGILPSLSPKTSFYIDGISRAVSTQKKKSPGLMFDFDLTKKSSLEKREGEAFLKIIAPRGSWFKISYSEDHIIFIEIRNIAYKIPIFTFLCALGFSLESIFQFFNYNINNFKLIPNKYDNTNALIKARNDIFILYSDLLPLLNKTKKNFEIKYIINHYFFSYIWNSNTRYCGEATRLHLYNKVGSPLSLNSLFLEEIDFIYITKIFIYRLINNNFKDENNDNLKNMRFRNGGDYIYLQTRQGLFDFESFLNINLHNIENNSFFCNITTNKKKEDIYSIKKKKNIKNFNLSKISFLKHILLKSWKSFFLSGTLSQFAENLNPLSYITHARRFTSLGPGSLKKAEASIEVRSINPSYNGRVCPIETPEGFNAGLVHSFSLYSFKGVNGELLLPFYFIYKNIKQSYYLPPIFFNIEEESNQSIITGDLIHEKWNDFLNKKLSLRNNFHLDKNDISKISFQSLSPYHMISLATSLIPFLEHNDANRALMGSNMQRQTVPVLGAHNFIVRTGLDTKFFSDISSIPISQINGFNFESNNNYCYFYKIDNLITLNNISYNYIKKTNHNSLYINESIKKKNPWHQQGDFLINNSVIENGKLALGPNLLLAYLPWHGYNYEDAVIINERCVSQKILTSLHIITLTNSLELAYREINKKKEFFYEVPVKLEILFSFFAPFYYNLKYYKNQEFSQFEKKNPSYYTNNINIGTFLKKGDCIFSKCRIRFSFSRELRLQYKELFILLREAFPTFEDFKNFANIFAYDKYKQKLDRKKQKKNTRLKTDNFIFNKNSTLFKKHKLKALINYYNIEDSTIYAQKNQEGLIISKHLKKVPMTYTSITPFDLEEFLSTKESKKKEYYNLFFTKSINIEILQLRDIQLGDKCAGRHGNKGIISKICPINEMPLLPDGTPIDIILNPLGIPSRMNVGQIFESLLGLAGFYLNETYTINIFDEQFGLEASRSFVLSKLYKASILSNKPWLFLKKNAGKTNIIDGLTGKYFQQPITIGYSSILKLIHMVTDKLHGRSIGGYSTLTLQPTKGKSLLGGQRVGEMELWALQGYGASWALQELYTLKSDLVEARQHFQNYINSFNIESNIYDRNDISLTELESLIISDTFKPYTLECFLEDLKALCIYIDY.

Belongs to the RNA polymerase beta chain family. As to quaternary structure, in plastids the minimal PEP RNA polymerase catalytic core is composed of four subunits: alpha, beta, beta', and beta''. When a (nuclear-encoded) sigma factor is associated with the core the holoenzyme is formed, which can initiate transcription.

The protein resides in the plastid. It catalyses the reaction RNA(n) + a ribonucleoside 5'-triphosphate = RNA(n+1) + diphosphate. Functionally, DNA-dependent RNA polymerase catalyzes the transcription of DNA into RNA using the four ribonucleoside triphosphates as substrates. The protein is DNA-directed RNA polymerase subunit beta (rpoB) of Helicosporidium sp. subsp. Simulium jonesii (Green alga).